We begin with the raw amino-acid sequence, 532 residues long: [Pyruvate dehydrogenase [acetyl-transferring]]-phosphatase 2, mitochondrial (532 aa).

A mitochondrion-targeting transit peptide spans 1-69; it reads MSSTVSYWIF…FALRKAYRHT (69 aa). One can recognise a PPM-type phosphatase domain in the interval 107–518; sequence NSVLRFESNQ…YRDDITVMVV (412 aa). D144, G145, D415, and D511 together coordinate Mn(2+).

This sequence belongs to the PP2C family. Mg(2+) serves as cofactor.

The protein localises to the mitochondrion. The catalysed reaction is O-phospho-L-seryl-[pyruvate dehydrogenase E1 alpha subunit] + H2O = L-seryl-[pyruvate dehydrogenase E1 alpha subunit] + phosphate. Mitochondrial enzyme that catalyzes the dephosphorylation and concomitant reactivation of the alpha subunit of the E1 component of the pyruvate dehydrogenase complex (PDC), thereby stimulating the conversion of pyruvate into acetyl-CoA. Acts as a crucial regulator of T cell metabolism and function, with a particular focus on T-helper Th17. The protein is [Pyruvate dehydrogenase [acetyl-transferring]]-phosphatase 2, mitochondrial (Pdp2) of Mus musculus (Mouse).